Reading from the N-terminus, the 208-residue chain is Small ribosomal subunit protein uS4 (208 aa).

In terms of domain architecture, S4 RNA-binding spans 98 to 159 (LRLDNVVFRL…RSKKVVRITE (62 aa)).

This sequence belongs to the universal ribosomal protein uS4 family. As to quaternary structure, part of the 30S ribosomal subunit. Contacts protein S5. The interaction surface between S4 and S5 is involved in control of translational fidelity.

One of the primary rRNA binding proteins, it binds directly to 16S rRNA where it nucleates assembly of the body of the 30S subunit. In terms of biological role, with S5 and S12 plays an important role in translational accuracy. The chain is Small ribosomal subunit protein uS4 from Anaeromyxobacter dehalogenans (strain 2CP-1 / ATCC BAA-258).